Reading from the N-terminus, the 399-residue chain is Aspartate aminotransferase (399 aa).

The L-aspartate site is built by Gly42 and Asn179. Lys240 carries the N6-(pyridoxal phosphate)lysine modification. Arg372 serves as a coordination point for L-aspartate.

It belongs to the class-I pyridoxal-phosphate-dependent aminotransferase family. Homodimer. Pyridoxal 5'-phosphate is required as a cofactor.

It localises to the cytoplasm. It carries out the reaction L-aspartate + 2-oxoglutarate = oxaloacetate + L-glutamate. This is Aspartate aminotransferase (aspC) from Sulfurisphaera tokodaii (strain DSM 16993 / JCM 10545 / NBRC 100140 / 7) (Sulfolobus tokodaii).